The chain runs to 291 residues: uncharacterized protein (291 aa).

Essential for virus function. This is an uncharacterized protein from Sulfolobus spindle-shape virus 1 (SSV1).